Consider the following 505-residue polypeptide: ATP synthase subunit alpha, chloroplastic (505 aa).

172–179 is a binding site for ATP; that stretch reads GDRQTGKT.

This sequence belongs to the ATPase alpha/beta chains family. As to quaternary structure, F-type ATPases have 2 components, CF(1) - the catalytic core - and CF(0) - the membrane proton channel. CF(1) has five subunits: alpha(3), beta(3), gamma(1), delta(1), epsilon(1). CF(0) has four main subunits: a, b, b' and c.

It localises to the plastid. Its subcellular location is the chloroplast thylakoid membrane. The catalysed reaction is ATP + H2O + 4 H(+)(in) = ADP + phosphate + 5 H(+)(out). Its function is as follows. Produces ATP from ADP in the presence of a proton gradient across the membrane. The alpha chain is a regulatory subunit. This Antithamnion sp. (Red alga) protein is ATP synthase subunit alpha, chloroplastic.